The following is a 792-amino-acid chain: MSQIAVADLTEAQAAEELERLADDLAAHDLRYHQQDAPTISDAEYDALKRRNLDIEDRFPHLVRDNSPSMRVGAARAEQFSPVEHGVPMLSLDNAFSNDEATEFDARIRRFLRLTNEPVFYTAEPKIDGLSASLRYEKGVLVQGATRGDGRMGEDVTANLRTIADIPHRLRGGDPQGGGWPDVIEIRGEVYVELEAFAAFNAAALEAGQRTYANPRNFAAGSLRQIDPKISAQRPLRFFAYAWGLTSEGFAATQWEALGKLRDWGFVTTAPPAERVQDAQGLLDIYAKFEVERPKLAFDIDGVVYKVDDLEQQRRLGFVSRSPRWAIARKFPAQQARTILEAIDLQVGRTGAITPVARLKPVTVGGVSVTNATLHNADEIARKDVRIGDTVILQRAGDVIPQIVGPVLEERPAGAVPFEFPTHCPCHLETPLVRESTAAGAETVVRRCSGEFACPFQRIEHLRHFVSRRAFDIEGLGEKQLAAFFEEGWIKEPADIFKLARDEAKLAELRERDGYGETSVANLVKGIEARRTIGLDRVIYGLGMRDIGETTSTVLARNFASPKGKGGFEDLQAAAERAAGQLPGAVYLELAGAPGVGPKARDELVEAGKGGLKADPWPEADSLEVKIGHAVPKLSKPARVALAERYGDWDTFAQALAQAGQGAPGEDYLQLAAIDGIGPVAAQSIARFFAEAHNREKVANLIAELDIQPVAKPKTDTAVAGKTIVFTGALEKMTRDEAKAQAEGLGAKVASSVSKKTDLVVAGPGAGSKLKTATELGIQVMTEDEWLAMVGG.

Residues 42 to 46 (DAEYD), 91 to 92 (SL), and glutamate 124 each bind NAD(+). Lysine 126 serves as the catalytic N6-AMP-lysine intermediate. NAD(+) is bound by residues arginine 147, glutamate 189, lysine 306, and lysine 330. The Zn(2+) site is built by cysteine 424, cysteine 426, cysteine 448, and cysteine 454. The 79-residue stretch at 714-792 (KTDTAVAGKT…EDEWLAMVGG (79 aa)) folds into the BRCT domain.

Belongs to the NAD-dependent DNA ligase family. LigA subfamily. It depends on Mg(2+) as a cofactor. Requires Mn(2+) as cofactor.

It catalyses the reaction NAD(+) + (deoxyribonucleotide)n-3'-hydroxyl + 5'-phospho-(deoxyribonucleotide)m = (deoxyribonucleotide)n+m + AMP + beta-nicotinamide D-nucleotide.. Its function is as follows. DNA ligase that catalyzes the formation of phosphodiester linkages between 5'-phosphoryl and 3'-hydroxyl groups in double-stranded DNA using NAD as a coenzyme and as the energy source for the reaction. It is essential for DNA replication and repair of damaged DNA. This chain is DNA ligase, found in Caulobacter sp. (strain K31).